A 1251-amino-acid chain; its full sequence is ATP-dependent helicase/nuclease subunit A (1251 aa).

One can recognise a UvrD-like helicase ATP-binding domain in the interval 5–481; sequence TKWTDEQWEA…IILSRNFRSR (477 aa). Residue 26–33 coordinates ATP; it reads AAAGAGKT. Residues 526–824 form the UvrD-like helicase C-terminal domain; that stretch reads TVGGEVEFHL…RIMSIHKSKG (299 aa). The interval 544-565 is disordered; that stretch reads NFTFENEGEEGRQADEGEEDEE.

The protein belongs to the helicase family. AddA subfamily. As to quaternary structure, heterodimer of AddA and AddB/RexB. Mg(2+) serves as cofactor.

The catalysed reaction is Couples ATP hydrolysis with the unwinding of duplex DNA by translocating in the 3'-5' direction.. It carries out the reaction ATP + H2O = ADP + phosphate + H(+). In terms of biological role, the heterodimer acts as both an ATP-dependent DNA helicase and an ATP-dependent, dual-direction single-stranded exonuclease. Recognizes the chi site generating a DNA molecule suitable for the initiation of homologous recombination. The AddA nuclease domain is required for chi fragment generation; this subunit has the helicase and 3' -&gt; 5' nuclease activities. The polypeptide is ATP-dependent helicase/nuclease subunit A (Acetivibrio thermocellus (strain ATCC 27405 / DSM 1237 / JCM 9322 / NBRC 103400 / NCIMB 10682 / NRRL B-4536 / VPI 7372) (Clostridium thermocellum)).